The chain runs to 156 residues: Transcription elongation factor GreA (156 aa).

A coiled-coil region spans residues 1 to 32 (MKKVRLTREGYEKLKKELEDLKRKFMYEISER).

It belongs to the GreA/GreB family.

In terms of biological role, necessary for efficient RNA polymerase transcription elongation past template-encoded arresting sites. The arresting sites in DNA have the property of trapping a certain fraction of elongating RNA polymerases that pass through, resulting in locked ternary complexes. Cleavage of the nascent transcript by cleavage factors such as GreA or GreB allows the resumption of elongation from the new 3'terminus. GreA releases sequences of 2 to 3 nucleotides. This Thermotoga maritima (strain ATCC 43589 / DSM 3109 / JCM 10099 / NBRC 100826 / MSB8) protein is Transcription elongation factor GreA.